The primary structure comprises 229 residues: ATP-dependent dethiobiotin synthetase BioD (229 aa).

Gly12–Ile17 provides a ligand contact to ATP. Thr16 is a Mg(2+) binding site. Residue Lys38 is part of the active site. Residues Asp46, Glu105–Gly108, and Ser165–Glu166 contribute to the ATP site. Residues Asp46 and Glu105 each contribute to the Mg(2+) site.

It belongs to the dethiobiotin synthetase family. As to quaternary structure, homodimer. The cofactor is Mg(2+).

It is found in the cytoplasm. It catalyses the reaction (7R,8S)-7,8-diammoniononanoate + CO2 + ATP = (4R,5S)-dethiobiotin + ADP + phosphate + 3 H(+). The enzyme catalyses (7R,8S)-8-amino-7-(carboxyamino)nonanoate + ATP = (4R,5S)-dethiobiotin + ADP + phosphate + H(+). The protein operates within cofactor biosynthesis; biotin biosynthesis; biotin from 7,8-diaminononanoate: step 1/2. Catalyzes a mechanistically unusual reaction, the ATP-dependent insertion of CO2 between the N7 and N8 nitrogen atoms of 7,8-diaminopelargonic acid (DAPA, also called 7,8-diammoniononanoate) to form a ureido ring. This cyanobacterium does not encode bioA (which catalyzes the formation of the precursor for this reaction in the cannonical pathway), instead it encodes bioU, which replaces bioA and also performs the first half of the cannonical BioD reaction. Thus in this organism BioD has a different substrate. The protein is ATP-dependent dethiobiotin synthetase BioD of Gloeobacter violaceus (strain ATCC 29082 / PCC 7421).